The sequence spans 193 residues: Imidazoleglycerol-phosphate dehydratase (193 aa).

It belongs to the imidazoleglycerol-phosphate dehydratase family.

The protein resides in the cytoplasm. The enzyme catalyses D-erythro-1-(imidazol-4-yl)glycerol 3-phosphate = 3-(imidazol-4-yl)-2-oxopropyl phosphate + H2O. It participates in amino-acid biosynthesis; L-histidine biosynthesis; L-histidine from 5-phospho-alpha-D-ribose 1-diphosphate: step 6/9. The chain is Imidazoleglycerol-phosphate dehydratase from Saccharolobus islandicus (strain M.16.27) (Sulfolobus islandicus).